Reading from the N-terminus, the 317-residue chain is tRNA(Met) cytidine acetate ligase (317 aa).

ATP-binding positions include 6–19 (IAEY…HIYQ), G100, N157, and R182.

Belongs to the TmcAL family.

The protein resides in the cytoplasm. The enzyme catalyses cytidine(34) in elongator tRNA(Met) + acetate + ATP = N(4)-acetylcytidine(34) in elongator tRNA(Met) + AMP + diphosphate. Catalyzes the formation of N(4)-acetylcytidine (ac(4)C) at the wobble position of elongator tRNA(Met), using acetate and ATP as substrates. First activates an acetate ion to form acetyladenylate (Ac-AMP) and then transfers the acetyl group to tRNA to form ac(4)C34. The polypeptide is tRNA(Met) cytidine acetate ligase (Mesomycoplasma hyopneumoniae (strain 232) (Mycoplasma hyopneumoniae)).